The following is a 230-amino-acid chain: uncharacterized protein (230 aa).

This is an uncharacterized protein from Aquifex aeolicus (strain VF5).